A 314-amino-acid polypeptide reads, in one-letter code: Flotillin-like protein FloA (314 aa).

A helical membrane pass occupies residues 4-24 (IGPIIIAVLIIIFLIVFFTLV).

It belongs to the flotillin-like FloA family. Homooligomerizes.

The protein resides in the cell membrane. Its subcellular location is the membrane raft. Its function is as follows. Found in functional membrane microdomains (FMM) that may be equivalent to eukaryotic membrane rafts. FMMs are highly dynamic and increase in number as cells age. Flotillins are thought to be important factors in membrane fluidity. This is Flotillin-like protein FloA from Listeria innocua serovar 6a (strain ATCC BAA-680 / CLIP 11262).